The following is a 109-amino-acid chain: Cell division protein FtsL (109 aa).

The Cytoplasmic portion of the chain corresponds to 1–3; it reads MSR. Residues 4–21 traverse the membrane as a helical segment; that stretch reads LNIFLLIIVMGCALSVVN. Residues 22-109 lie on the Periplasmic side of the membrane; it reads STNQQRQIFI…ASAAPTGGAR (88 aa).

The protein belongs to the FtsL family. Part of a complex composed of FtsB, FtsL and FtsQ.

Its subcellular location is the cell inner membrane. Functionally, essential cell division protein. May link together the upstream cell division proteins, which are predominantly cytoplasmic, with the downstream cell division proteins, which are predominantly periplasmic. The sequence is that of Cell division protein FtsL from Burkholderia pseudomallei (strain K96243).